Here is a 389-residue protein sequence, read N- to C-terminus: Acyl-[acyl-carrier-protein] dehydrogenase MbtN (389 aa).

It belongs to the acyl-CoA dehydrogenase family. FAD serves as cofactor.

It participates in siderophore biosynthesis; mycobactin biosynthesis. Its function is as follows. Catalyzes the dehydrogenation at the alpha-beta position of ACP-bound acyl chains. This results in the introduction of a double bond in the lipidic chain, which is further transferred to the epsilon-amino group of lysine residue in the mycobactin core by MbtK. In Mycobacterium sp. (strain MCS), this protein is Acyl-[acyl-carrier-protein] dehydrogenase MbtN (mbtN).